A 94-amino-acid chain; its full sequence is Phosphoribosyl-ATP pyrophosphatase (94 aa).

Belongs to the PRA-PH family.

The protein resides in the cytoplasm. The enzyme catalyses 1-(5-phospho-beta-D-ribosyl)-ATP + H2O = 1-(5-phospho-beta-D-ribosyl)-5'-AMP + diphosphate + H(+). It functions in the pathway amino-acid biosynthesis; L-histidine biosynthesis; L-histidine from 5-phospho-alpha-D-ribose 1-diphosphate: step 2/9. This Pyrobaculum aerophilum (strain ATCC 51768 / DSM 7523 / JCM 9630 / CIP 104966 / NBRC 100827 / IM2) protein is Phosphoribosyl-ATP pyrophosphatase (hisE).